We begin with the raw amino-acid sequence, 93 residues long: Pyrimidine/purine nucleoside phosphorylase (93 aa).

Belongs to the nucleoside phosphorylase PpnP family.

It catalyses the reaction a purine D-ribonucleoside + phosphate = a purine nucleobase + alpha-D-ribose 1-phosphate. The enzyme catalyses adenosine + phosphate = alpha-D-ribose 1-phosphate + adenine. It carries out the reaction cytidine + phosphate = cytosine + alpha-D-ribose 1-phosphate. The catalysed reaction is guanosine + phosphate = alpha-D-ribose 1-phosphate + guanine. It catalyses the reaction inosine + phosphate = alpha-D-ribose 1-phosphate + hypoxanthine. The enzyme catalyses thymidine + phosphate = 2-deoxy-alpha-D-ribose 1-phosphate + thymine. It carries out the reaction uridine + phosphate = alpha-D-ribose 1-phosphate + uracil. The catalysed reaction is xanthosine + phosphate = alpha-D-ribose 1-phosphate + xanthine. In terms of biological role, catalyzes the phosphorolysis of diverse nucleosides, yielding D-ribose 1-phosphate and the respective free bases. Can use uridine, adenosine, guanosine, cytidine, thymidine, inosine and xanthosine as substrates. Also catalyzes the reverse reactions. In Marinobacter nauticus (strain ATCC 700491 / DSM 11845 / VT8) (Marinobacter aquaeolei), this protein is Pyrimidine/purine nucleoside phosphorylase.